Reading from the N-terminus, the 597-residue chain is Elongation factor 4 (597 aa).

A tr-type G domain is found at Lys2–Glu184. Residues Asp14 to Thr19 and Asn131 to Asp134 contribute to the GTP site.

This sequence belongs to the TRAFAC class translation factor GTPase superfamily. Classic translation factor GTPase family. LepA subfamily.

The protein resides in the cell inner membrane. It carries out the reaction GTP + H2O = GDP + phosphate + H(+). Required for accurate and efficient protein synthesis under certain stress conditions. May act as a fidelity factor of the translation reaction, by catalyzing a one-codon backward translocation of tRNAs on improperly translocated ribosomes. Back-translocation proceeds from a post-translocation (POST) complex to a pre-translocation (PRE) complex, thus giving elongation factor G a second chance to translocate the tRNAs correctly. Binds to ribosomes in a GTP-dependent manner. The polypeptide is Elongation factor 4 (Aliivibrio fischeri (strain MJ11) (Vibrio fischeri)).